The chain runs to 935 residues: Transmembrane channel-like protein 1 (935 aa).

Disordered regions lie at residues 1-21 (MPRH…DEGK) and 37-204 (ERGK…LGSL). Composition is skewed to basic and acidic residues over residues 37–47 (ERGKIKQASRD), 54–79 (RNGE…EKKH), 109–136 (DKSS…EKDV), 152–163 (NHEKTKQHLKEE), and 172–184 (PETT…KSES). 10 helical membrane passes run 303 to 340 (SSVA…MGKP), 392 to 423 (RMPL…ANEE), 480 to 510 (LTRF…VRRS), 523 to 550 (WWER…ISTL), 555 to 589 (PRIA…QLKR), 633 to 670 (WETM…VRFL), 690 to 710 (VSGN…GAFY), 714 to 736 (LPAL…VMCC), 751 to 774 (NFYM…TIVS), and 818 to 851 (LVLP…KKKL). Positions 874-886 (EQARKAGEQRRNS) are enriched in basic and acidic residues. A disordered region spans residues 874–935 (EQARKAGEQR…QQPQKNSKKR (62 aa)). Composition is skewed to polar residues over residues 899 to 919 (SHVS…TSSG) and 926 to 935 (QQPQKNSKKR).

It belongs to the TMC family. In terms of assembly, interacts specifically with isoform CD3 of PCDH15A (via cytoplasmic domain). In terms of tissue distribution, in adults, expression is restricted to the hair cells of inner ear and lateral line organ. Expressed at higher levels in the larval lateral-line neuromasts than in the larval inner ear. Expressed in the sensory hair cell patches of the ear at 4 days post fertilization (dpf).

It localises to the cell membrane. It catalyses the reaction Ca(2+)(in) = Ca(2+)(out). In terms of biological role, pore-forming subunit of the mechanotransducer (MET) non-selective cation channel complex located at the tips of hair-cell stereocilia. Highly permeable to calcium and likely transports monovalent cations. This Danio rerio (Zebrafish) protein is Transmembrane channel-like protein 1.